We begin with the raw amino-acid sequence, 237 residues long: 2,3-bisphosphoglycerate-dependent phosphoglycerate mutase (237 aa).

Substrate contacts are provided by residues 8 to 15 (RHGQSQWN), 21 to 22 (TG), R60, 87 to 90 (ERHY), K98, 114 to 115 (RR), and 180 to 181 (GN). The Tele-phosphohistidine intermediate role is filled by H9. E87 acts as the Proton donor/acceptor in catalysis.

Belongs to the phosphoglycerate mutase family. BPG-dependent PGAM subfamily. In terms of assembly, homodimer.

The catalysed reaction is (2R)-2-phosphoglycerate = (2R)-3-phosphoglycerate. The protein operates within carbohydrate degradation; glycolysis; pyruvate from D-glyceraldehyde 3-phosphate: step 3/5. Its function is as follows. Catalyzes the interconversion of 2-phosphoglycerate and 3-phosphoglycerate. This Caulobacter vibrioides (strain ATCC 19089 / CIP 103742 / CB 15) (Caulobacter crescentus) protein is 2,3-bisphosphoglycerate-dependent phosphoglycerate mutase.